We begin with the raw amino-acid sequence, 237 residues long: Mediator of RNA polymerase II transcription subunit 20 (237 aa).

It belongs to the Mediator complex subunit 20 family. As to quaternary structure, component of the Mediator complex.

It is found in the nucleus. Its function is as follows. Component of the Mediator complex, a coactivator involved in the regulated transcription of nearly all RNA polymerase II-dependent genes. Mediator functions as a bridge to convey information from gene-specific regulatory proteins to the basal RNA polymerase II transcription machinery. Mediator is recruited to promoters by direct interactions with regulatory proteins and serves as a scaffold for the assembly of a functional preinitiation complex with RNA polymerase II and the general transcription factors. This Scheffersomyces stipitis (strain ATCC 58785 / CBS 6054 / NBRC 10063 / NRRL Y-11545) (Yeast) protein is Mediator of RNA polymerase II transcription subunit 20 (SRB2).